Reading from the N-terminus, the 213-residue chain is ATP phosphoribosyltransferase (213 aa).

It belongs to the ATP phosphoribosyltransferase family. Short subfamily. In terms of assembly, heteromultimer composed of HisG and HisZ subunits.

The protein localises to the cytoplasm. It carries out the reaction 1-(5-phospho-beta-D-ribosyl)-ATP + diphosphate = 5-phospho-alpha-D-ribose 1-diphosphate + ATP. It participates in amino-acid biosynthesis; L-histidine biosynthesis; L-histidine from 5-phospho-alpha-D-ribose 1-diphosphate: step 1/9. Catalyzes the condensation of ATP and 5-phosphoribose 1-diphosphate to form N'-(5'-phosphoribosyl)-ATP (PR-ATP). Has a crucial role in the pathway because the rate of histidine biosynthesis seems to be controlled primarily by regulation of HisG enzymatic activity. The protein is ATP phosphoribosyltransferase of Variovorax paradoxus (strain S110).